The sequence spans 244 residues: 7-cyano-7-deazaguanine synthase (244 aa).

14–24 provides a ligand contact to ATP; that stretch reads FSGGQDSATCV. The Zn(2+) site is built by Cys-202, Cys-217, Cys-220, and Cys-223.

Belongs to the QueC family. It depends on Zn(2+) as a cofactor.

The catalysed reaction is 7-carboxy-7-deazaguanine + NH4(+) + ATP = 7-cyano-7-deazaguanine + ADP + phosphate + H2O + H(+). Its pathway is purine metabolism; 7-cyano-7-deazaguanine biosynthesis. Functionally, catalyzes the ATP-dependent conversion of 7-carboxy-7-deazaguanine (CDG) to 7-cyano-7-deazaguanine (preQ(0)). The chain is 7-cyano-7-deazaguanine synthase from Burkholderia vietnamiensis (strain G4 / LMG 22486) (Burkholderia cepacia (strain R1808)).